A 435-amino-acid polypeptide reads, in one-letter code: C4-dicarboxylate transport protein (435 aa).

Helical transmembrane passes span 4 to 24, 44 to 64, 76 to 96, 142 to 162, 184 to 204, 222 to 242, 289 to 309, 326 to 346, and 352 to 372; these read SLFK…ILLG, LIKM…IAGM, VALL…LIIV, IGAF…LFGF, VIFG…FGAM, LIIC…GTIA, VVGL…SIYL, IFHQ…VAGV, and IVLA…LALI.

It belongs to the dicarboxylate/amino acid:cation symporter (DAACS) (TC 2.A.23) family.

It is found in the cell inner membrane. In terms of biological role, responsible for the transport of dicarboxylates such as succinate, fumarate, and malate from the periplasm across the membrane. This Salmonella paratyphi A (strain ATCC 9150 / SARB42) protein is C4-dicarboxylate transport protein.